Reading from the N-terminus, the 296-residue chain is Glycine--tRNA ligase alpha subunit (296 aa).

This sequence belongs to the class-II aminoacyl-tRNA synthetase family. As to quaternary structure, tetramer of two alpha and two beta subunits.

The protein resides in the cytoplasm. The catalysed reaction is tRNA(Gly) + glycine + ATP = glycyl-tRNA(Gly) + AMP + diphosphate. The protein is Glycine--tRNA ligase alpha subunit of Synechococcus sp. (strain CC9605).